A 205-amino-acid polypeptide reads, in one-letter code: High frequency lysogenization protein HflD homolog (205 aa).

This sequence belongs to the HflD family.

Its subcellular location is the cytoplasm. The protein resides in the cell inner membrane. The polypeptide is High frequency lysogenization protein HflD homolog (Vibrio vulnificus (strain CMCP6)).